The chain runs to 77 residues: Large ribosomal subunit protein bL28 (77 aa).

Belongs to the bacterial ribosomal protein bL28 family.

The protein is Large ribosomal subunit protein bL28 of Acidovorax ebreus (strain TPSY) (Diaphorobacter sp. (strain TPSY)).